Reading from the N-terminus, the 342-residue chain is RNA 3'-terminal phosphate cyclase (342 aa).

Residues Gln103 and 283 to 287 contribute to the ATP site; that span reads YLADQ. His308 functions as the Tele-AMP-histidine intermediate in the catalytic mechanism.

This sequence belongs to the RNA 3'-terminal cyclase family. Type 1 subfamily.

It localises to the cytoplasm. The catalysed reaction is a 3'-end 3'-phospho-ribonucleotide-RNA + ATP = a 3'-end 2',3'-cyclophospho-ribonucleotide-RNA + AMP + diphosphate. In terms of biological role, catalyzes the conversion of 3'-phosphate to a 2',3'-cyclic phosphodiester at the end of RNA. The mechanism of action of the enzyme occurs in 3 steps: (A) adenylation of the enzyme by ATP; (B) transfer of adenylate to an RNA-N3'P to produce RNA-N3'PP5'A; (C) and attack of the adjacent 2'-hydroxyl on the 3'-phosphorus in the diester linkage to produce the cyclic end product. The biological role of this enzyme is unknown but it is likely to function in some aspects of cellular RNA processing. In Shigella dysenteriae serotype 1 (strain Sd197), this protein is RNA 3'-terminal phosphate cyclase.